The following is a 187-amino-acid chain: Thioredoxin F, chloroplastic (187 aa).

The N-terminal 72 residues, 1–72 (MALRLSVSSS…GSDTATVGAE (72 aa)), are a transit peptide targeting the chloroplast. A Thioredoxin domain is found at 73-186 (AEAVAVTGQV…LIQAIETVKS (114 aa)). Residues C111 and C114 each act as nucleophile in the active site. Residues C111 and C114 are joined by a disulfide bond.

This sequence belongs to the thioredoxin family. Plant F-type subfamily.

Its subcellular location is the plastid. It is found in the chloroplast. In terms of biological role, thiol-disulfide oxidoreductase involved in the redox regulation of enzymes of both reductive pentose phosphate pathway (Calvin-Benson cycle) and oxidative pentose phosphate pathway. The polypeptide is Thioredoxin F, chloroplastic (Oryza sativa subsp. japonica (Rice)).